The primary structure comprises 438 residues: MRRRSKKIKTENNSNPETSEERNKFDEIPHDLVIEILERLPLKSVARFLTVSKLWATTIRSPDFRKSYRGGSSSEPRTLIVSDLNFKEPNPKLHFFRPSISSPSFLSSLTCPFTYPRHEEYYYHHVNGLISVGYGTDQIVINPTTGKFITLPRPKTRRKLVISFFGYDSVSDQYKVLCMTERLRGHPEEASSQHQVYTLGAKQKSWKMINCSIPHRPWSWNAVCINGVVYYIAKTGEGMFRRCLMRFDLKSDNLDLCTILPEEIQTSLHDYFLINYKGKVAIPNQPNFYTYDVWVMNQEGGKIEWLKNITFTIKPRKGFVRYLFVTGTTHTGEFILAPTSYTDEFYVFHYNPDMNSFRKIRVQAPGVKFSFAQKASVVFSDHSLLRLDNLHIRGSTHTATGEFILAPRFYSDDLNVIHFNPDTNSFRSTKVEVYEDYE.

The tract at residues 1-24 (MRRRSKKIKTENNSNPETSEERNK) is disordered. An F-box domain is found at 22–68 (RNKFDEIPHDLVIEILERLPLKSVARFLTVSKLWATTIRSPDFRKSY).

The protein is Putative F-box protein At5g15660 of Arabidopsis thaliana (Mouse-ear cress).